The chain runs to 599 residues: Proline--tRNA ligase (599 aa).

It belongs to the class-II aminoacyl-tRNA synthetase family. ProS type 1 subfamily. As to quaternary structure, homodimer.

The protein resides in the cytoplasm. The catalysed reaction is tRNA(Pro) + L-proline + ATP = L-prolyl-tRNA(Pro) + AMP + diphosphate. Catalyzes the attachment of proline to tRNA(Pro) in a two-step reaction: proline is first activated by ATP to form Pro-AMP and then transferred to the acceptor end of tRNA(Pro). As ProRS can inadvertently accommodate and process non-cognate amino acids such as alanine and cysteine, to avoid such errors it has two additional distinct editing activities against alanine. One activity is designated as 'pretransfer' editing and involves the tRNA(Pro)-independent hydrolysis of activated Ala-AMP. The other activity is designated 'posttransfer' editing and involves deacylation of mischarged Ala-tRNA(Pro). The misacylated Cys-tRNA(Pro) is not edited by ProRS. In Bifidobacterium animalis subsp. lactis (strain AD011), this protein is Proline--tRNA ligase.